The sequence spans 366 residues: Ribosomal RNA large subunit methyltransferase M (366 aa).

S-adenosyl-L-methionine is bound by residues Ser-188, 221 to 224, Asp-240, Asp-260, and Asp-277; that span reads CPGG. Lys-306 acts as the Proton acceptor in catalysis.

This sequence belongs to the class I-like SAM-binding methyltransferase superfamily. RNA methyltransferase RlmE family. RlmM subfamily. As to quaternary structure, monomer.

It localises to the cytoplasm. The catalysed reaction is cytidine(2498) in 23S rRNA + S-adenosyl-L-methionine = 2'-O-methylcytidine(2498) in 23S rRNA + S-adenosyl-L-homocysteine + H(+). Catalyzes the 2'-O-methylation at nucleotide C2498 in 23S rRNA. The protein is Ribosomal RNA large subunit methyltransferase M of Pectobacterium carotovorum subsp. carotovorum (strain PC1).